Here is a 287-residue protein sequence, read N- to C-terminus: Putative esterase/lipase HI_0193 (287 aa).

Residues 47-273 form the AB hydrolase-1 domain; sequence PVLIFIHGLF…SGHWVHAEKP (227 aa). Residues serine 119 and histidine 266 contribute to the active site.

It belongs to the DmpD/TodF/XylF esterase family.

The protein is Putative esterase/lipase HI_0193 of Haemophilus influenzae (strain ATCC 51907 / DSM 11121 / KW20 / Rd).